Reading from the N-terminus, the 112-residue chain is Protein NIM1-INTERACTING 3 (112 aa).

Disordered stretches follow at residues 1–20 (MDRD…EEKM) and 77–112 (EKAA…NLSL). 2 coiled-coil regions span residues 1–35 (MDRD…EMRK) and 69–96 (NKAE…SKEK). Residues 77 to 89 (EKAANESSSASNE) show a composition bias toward low complexity.

Belongs to the NPR1-interactor family. Interacts with NPR1 C-terminal region.

It localises to the nucleus. In Arabidopsis thaliana (Mouse-ear cress), this protein is Protein NIM1-INTERACTING 3.